Here is a 326-residue protein sequence, read N- to C-terminus: Metallophosphoesterase domain-containing protein 1 (326 aa).

This sequence belongs to the UPF0046 family. In terms of tissue distribution, expressed predominantly in adult brain.

Functionally, may have metallophosphoesterase activity (in vitro). The sequence is that of Metallophosphoesterase domain-containing protein 1 (MPPED1) from Homo sapiens (Human).